The primary structure comprises 495 residues: Glycerol kinase (495 aa).

Position 11 (Thr-11) interacts with ADP. Thr-11, Thr-12, and Ser-13 together coordinate ATP. Residue Thr-11 coordinates sn-glycerol 3-phosphate. Residue Arg-15 coordinates ADP. Residues Arg-81, Glu-82, Tyr-133, and Asp-242 each contribute to the sn-glycerol 3-phosphate site. Positions 81, 82, 133, 242, and 243 each coordinate glycerol. ADP-binding residues include Thr-264 and Gly-307. Positions 264, 307, 311, and 408 each coordinate ATP. ADP is bound by residues Gly-408 and Asn-412.

The protein belongs to the FGGY kinase family.

The catalysed reaction is glycerol + ATP = sn-glycerol 3-phosphate + ADP + H(+). It participates in polyol metabolism; glycerol degradation via glycerol kinase pathway; sn-glycerol 3-phosphate from glycerol: step 1/1. Inhibited by fructose 1,6-bisphosphate (FBP). Key enzyme in the regulation of glycerol uptake and metabolism. Catalyzes the phosphorylation of glycerol to yield sn-glycerol 3-phosphate. This Acinetobacter baylyi (strain ATCC 33305 / BD413 / ADP1) protein is Glycerol kinase.